The chain runs to 782 residues: Host cell factor homolog hcf-1 (782 aa).

The disordered stretch occupies residues 1-25; that stretch reads MDEDVGLEATNYSRGDESRSEEQEK. Positions 14-25 are enriched in basic and acidic residues; sequence RGDESRSEEQEK. Kelch repeat units lie at residues 55–103, 105–151, 161–222, 227–271, and 280–324; these read LIVI…SLGN, IYRF…RIGH, KAYV…IYEK, RMVV…PRSL, and KMFV…VPLH. A phosphoserine mark is found at serine 423, serine 431, and serine 449. Positions 423–434 are enriched in polar residues; that stretch reads SPIKRATTSPRK. Residues 423–553 are disordered; sequence SPIKRATTSP…EENGDDDLPW (131 aa). 2 stretches are compositionally biased toward polar residues: residues 456–469 and 496–513; these read TAPS…TTYT and TASP…SSTC. The residue at position 498 (serine 498) is a Phosphoserine. Residues 537–552 are compositionally biased toward acidic residues; sequence GETDEMKEENGDDDLP.

Interacts with daf-16/FOXO. Interacts with deacetylase sir-2.1. Interacts with the 14-3-3 family proteins ftt-2 and par-5. Post-translationally, phosphorylated at multiple serine residues. Phosphorylation is developmentally regulated, occurring in embryos but not L1 larvae. Phosphorylation may be cell-cycle-regulated.

Its subcellular location is the nucleus. Transcriptional coregulator. Involved in control of the cell cycle and in modulating mitotic histone phosphorylation. Plays a role in modulating lifespan by regulating the transcriptional activity of daf-16/Forkhead box protein O, in concert with protein deacetylase sir-2.1/SIRT1, and perhaps acting independently of the Insulin/IGF-1-like signaling (IIS) mediated pathway. Negatively modulates responses to environmental stresses, including oxidative stress, heat stress, and exposure to heavy metals; acting via regulation of the transcription factors daf-16 and skn-1. May play a role in pharyngeal development via positive modulation of expression of sup-35. This chain is Host cell factor homolog hcf-1, found in Caenorhabditis elegans.